The primary structure comprises 482 residues: Catalase (482 aa).

Over residues Met-1 to Thr-11 the composition is skewed to polar residues. Residues Met-1–Asn-21 form a disordered region. Residues His-57 and Asn-130 contribute to the active site. Heme is bound at residue Tyr-340.

Belongs to the catalase family. In terms of assembly, homodimer. It depends on heme as a cofactor.

The enzyme catalyses 2 H2O2 = O2 + 2 H2O. Its function is as follows. Decomposes hydrogen peroxide into water and oxygen; serves to protect cells from the toxic effects of hydrogen peroxide. The chain is Catalase (katA) from Bordetella bronchiseptica (strain ATCC BAA-588 / NCTC 13252 / RB50) (Alcaligenes bronchisepticus).